We begin with the raw amino-acid sequence, 359 residues long: uncharacterized protein (359 aa).

One can recognise a PINc domain in the interval 163-275; that stretch reads VVDTSCIIDG…SKVANLQKVQ (113 aa). Mg(2+) contacts are provided by D165 and D244. The 62-residue stretch at 289–350 folds into the TRAM domain; that stretch reads IYLPGDSLEL…LQTSAGRMIF (62 aa).

Belongs to the ycf81 family. It in the central section; belongs to the PINc/VapC protein family. Mg(2+) is required as a cofactor.

Its function is as follows. An RNase. This is an uncharacterized protein from Synechocystis sp. (strain ATCC 27184 / PCC 6803 / Kazusa).